Consider the following 160-residue polypeptide: uncharacterized protein (160 aa).

The N-acetyltransferase domain maps to 9-151 (LLINYKTLEK…GENPLIWLPE (143 aa)).

This is an uncharacterized protein from Oceanobacillus iheyensis (strain DSM 14371 / CIP 107618 / JCM 11309 / KCTC 3954 / HTE831).